We begin with the raw amino-acid sequence, 215 residues long: Sec-independent protein translocase protein TatB (215 aa).

Residues 1–21 (MLDIGWTELVVIAIVLIIVVG) form a helical membrane-spanning segment. 2 disordered regions span residues 95 to 119 (DLQKATTPDRPPASATPEPLVEPVN) and 138 to 215 (AVSS…KGDA). The segment covering 145–157 (QMDRAADVPKASE) has biased composition (basic and acidic residues). Over residues 203 to 215 (SKTRAASRKKGDA) the composition is skewed to basic residues.

It belongs to the TatB family. The Tat system comprises two distinct complexes: a TatABC complex, containing multiple copies of TatA, TatB and TatC subunits, and a separate TatA complex, containing only TatA subunits. Substrates initially bind to the TatABC complex, which probably triggers association of the separate TatA complex to form the active translocon.

The protein resides in the cell inner membrane. Its function is as follows. Part of the twin-arginine translocation (Tat) system that transports large folded proteins containing a characteristic twin-arginine motif in their signal peptide across membranes. Together with TatC, TatB is part of a receptor directly interacting with Tat signal peptides. TatB may form an oligomeric binding site that transiently accommodates folded Tat precursor proteins before their translocation. The protein is Sec-independent protein translocase protein TatB of Rhizobium meliloti (strain 1021) (Ensifer meliloti).